The primary structure comprises 490 residues: Cobyric acid synthase (490 aa).

A GATase cobBQ-type domain is found at 250-432 (QLEIVVIRLP…LHGLLDNHAW (183 aa)). Cys-328 serves as the catalytic Nucleophile. His-424 is an active-site residue.

It belongs to the CobB/CobQ family. CobQ subfamily.

It functions in the pathway cofactor biosynthesis; adenosylcobalamin biosynthesis. Functionally, catalyzes amidations at positions B, D, E, and G on adenosylcobyrinic A,C-diamide. NH(2) groups are provided by glutamine, and one molecule of ATP is hydrogenolyzed for each amidation. The chain is Cobyric acid synthase from Gloeobacter violaceus (strain ATCC 29082 / PCC 7421).